The following is a 375-amino-acid chain: MSDVIALAKDLIRRPSVTPLDEGCQTLMAERLAKLGFVIEPMVFEDTTNLWARRGSEGPLFCFAGHTDVVPAGPLDKWHTPPFEPTIQDGVLYGRGAADMKGSLAAMVVAVERFVAEHPDHSGSIAFLITSDEEGPFINGTTRVIDTLEARHEKITWCIVGEPSSTTVVGDVVKNGRRGSITGDLLVRGVQGHVAYPHLADNPIHKAAPALAELAATVWDEGNAYFPPTSFQIANISAGTGASNVIPGELHVQFNFRFSTELTDLDIRERVEALLDRHGLDYQLDWTLSGQPFLTDTGKLLAAAVSAIEAVNGQQPALLTTGGTSDGRFIAPTGAEVIELGPVNATIHKVNECVKADDLDLLADMYQGVLARLLA.

His-66 is a binding site for Zn(2+). Residue Asp-68 is part of the active site. Asp-99 provides a ligand contact to Zn(2+). Glu-133 (proton acceptor) is an active-site residue. Residues Glu-134, Glu-162, and His-348 each coordinate Zn(2+).

It belongs to the peptidase M20A family. DapE subfamily. As to quaternary structure, homodimer. Zn(2+) is required as a cofactor. Requires Co(2+) as cofactor.

The catalysed reaction is N-succinyl-(2S,6S)-2,6-diaminopimelate + H2O = (2S,6S)-2,6-diaminopimelate + succinate. It participates in amino-acid biosynthesis; L-lysine biosynthesis via DAP pathway; LL-2,6-diaminopimelate from (S)-tetrahydrodipicolinate (succinylase route): step 3/3. Its function is as follows. Catalyzes the hydrolysis of N-succinyl-L,L-diaminopimelic acid (SDAP), forming succinate and LL-2,6-diaminopimelate (DAP), an intermediate involved in the bacterial biosynthesis of lysine and meso-diaminopimelic acid, an essential component of bacterial cell walls. This is Succinyl-diaminopimelate desuccinylase from Aeromonas hydrophila subsp. hydrophila (strain ATCC 7966 / DSM 30187 / BCRC 13018 / CCUG 14551 / JCM 1027 / KCTC 2358 / NCIMB 9240 / NCTC 8049).